The sequence spans 544 residues: Chaperonin GroEL 2 (544 aa).

ATP contacts are provided by residues 29–32 (TLGP), 86–90 (DGTTT), Gly413, 479–481 (NAA), and Asp495.

This sequence belongs to the chaperonin (HSP60) family. In terms of assembly, forms a cylinder of 14 subunits composed of two heptameric rings stacked back-to-back. Interacts with the co-chaperonin GroES.

The protein resides in the cytoplasm. It carries out the reaction ATP + H2O + a folded polypeptide = ADP + phosphate + an unfolded polypeptide.. Its function is as follows. Together with its co-chaperonin GroES, plays an essential role in assisting protein folding. The GroEL-GroES system forms a nano-cage that allows encapsulation of the non-native substrate proteins and provides a physical environment optimized to promote and accelerate protein folding. In Synechococcus sp. (strain CC9605), this protein is Chaperonin GroEL 2.